Here is a 205-residue protein sequence, read N- to C-terminus: GTP cyclohydrolase-2 (205 aa).

Residue 49 to 53 (RIHSE) coordinates GTP. Residues Cys54, Cys65, and Cys67 each contribute to the Zn(2+) site. GTP is bound by residues Gln70, 92 to 94 (EGR), and Thr114. The active-site Proton acceptor is the Asp126. Catalysis depends on Arg128, which acts as the Nucleophile. GTP-binding residues include Thr149 and Lys154.

This sequence belongs to the GTP cyclohydrolase II family. The cofactor is Zn(2+).

It carries out the reaction GTP + 4 H2O = 2,5-diamino-6-hydroxy-4-(5-phosphoribosylamino)-pyrimidine + formate + 2 phosphate + 3 H(+). The protein operates within cofactor biosynthesis; riboflavin biosynthesis; 5-amino-6-(D-ribitylamino)uracil from GTP: step 1/4. Functionally, catalyzes the conversion of GTP to 2,5-diamino-6-ribosylamino-4(3H)-pyrimidinone 5'-phosphate (DARP), formate and pyrophosphate. The polypeptide is GTP cyclohydrolase-2 (Shewanella piezotolerans (strain WP3 / JCM 13877)).